We begin with the raw amino-acid sequence, 570 residues long: Putative ABC transporter ATP-binding protein SACOL2708 (570 aa).

ABC transporter domains follow at residues 6-247 and 304-537; these read ISFK…GIRE and LELN…ASLR. ATP contacts are provided by residues 40–47 and 338–345; these read GASGSGKS and GHNGAGKS.

Belongs to the ABC transporter superfamily.

It is found in the cell membrane. In terms of biological role, probably part of an ABC transporter complex. Responsible for energy coupling to the transport system. The chain is Putative ABC transporter ATP-binding protein SACOL2708 from Staphylococcus aureus (strain COL).